The sequence spans 229 residues: 7-cyano-7-deazaguanine synthase (229 aa).

7–17 provides a ligand contact to ATP; the sequence is LSGGLDSTTVL. 4 residues coordinate Zn(2+): Cys-191, Cys-204, Cys-207, and Cys-210.

The protein belongs to the QueC family. Zn(2+) is required as a cofactor.

It carries out the reaction 7-carboxy-7-deazaguanine + NH4(+) + ATP = 7-cyano-7-deazaguanine + ADP + phosphate + H2O + H(+). It participates in purine metabolism; 7-cyano-7-deazaguanine biosynthesis. Its function is as follows. Catalyzes the ATP-dependent conversion of 7-carboxy-7-deazaguanine (CDG) to 7-cyano-7-deazaguanine (preQ(0)). In Cyanothece sp. (strain PCC 7425 / ATCC 29141), this protein is 7-cyano-7-deazaguanine synthase.